We begin with the raw amino-acid sequence, 520 residues long: Cytochrome P450 315a1, mitochondrial (520 aa).

Residue cysteine 466 coordinates heme.

The protein belongs to the cytochrome P450 family. Heme is required as a cofactor. As to expression, complex coexpression pattern of dib (disembodied) and sad (shade) in the early embryo that restricts to the prothoracic gland cells of the developing ring gland during late embryogenesis. In larvae and adult, coexpression is seen in prothoracic gland and follicle cells of the ovary. In adults, coexpression is seen in the follicle cells, sad only is expressed in nurse cells.

The protein localises to the mitochondrion membrane. The enzyme catalyses 2-deoxyecdysone + 2 reduced [adrenodoxin] + O2 + 2 H(+) = ecdysone + 2 oxidized [adrenodoxin] + H2O. The catalysed reaction is 2,22-dideoxyecdysone + 2 reduced [adrenodoxin] + O2 + 2 H(+) = 22-deoxyecdysone + 2 oxidized [adrenodoxin] + H2O. It participates in steroid biosynthesis; ecdysteroid biosynthesis. Functionally, required for CNS development: midline glial cells. Involved in the metabolism of insect hormones: responsible for ecdysteroid C2-hydroxylase activity. May be involved in the breakdown of synthetic insecticides. The protein is Cytochrome P450 315a1, mitochondrial of Drosophila melanogaster (Fruit fly).